Here is a 795-residue protein sequence, read N- to C-terminus: Inactive N-acetylated-alpha-linked acidic dipeptidase-like protein 2 (795 aa).

Residues 1-38 (MGENEASLPNTSLQGKKMAYQKVHADQRAPGHSQYLDN) form a disordered region. Residues 1–121 (MGENEASLPN…RSAPKSNRCN (121 aa)) lie on the Cytoplasmic side of the membrane. Ser92 carries the phosphoserine modification. The helical; Signal-anchor for type II membrane protein transmembrane segment at 122–142 (FCHVLKILCTATILFIFGILI) threads the bilayer. Residues 143 to 795 (GYYVHTNCPS…VFKSVLDGKN (653 aa)) are Extracellular-facing. N-linked (GlcNAc...) asparagine glycosylation is found at Asn295, Asn373, Asn534, and Asn759.

Belongs to the peptidase M28 family. M28B subfamily. In terms of tissue distribution, expressed at higher level in kidney and placenta. In embryo, it is mainly confined to duodenal and stomach endoderm, mesonephros, metanephros and pancreas.

It localises to the membrane. Its function is as follows. May be catalytically inactive. The chain is Inactive N-acetylated-alpha-linked acidic dipeptidase-like protein 2 (NAALADL2) from Homo sapiens (Human).